Reading from the N-terminus, the 534-residue chain is Glutamyl-tRNA(Gln) amidotransferase subunit B, mitochondrial (534 aa).

Residues 1 to 28 (MTVLCRLRHCHLSTPTLCRRFHDARVYK) constitute a mitochondrion transit peptide.

Belongs to the GatB/GatE family. GatB subfamily. In terms of assembly, subunit of the heterotrimeric GatCAB amidotransferase (AdT) complex, composed of A, B and C subunits.

The protein resides in the mitochondrion. The catalysed reaction is L-glutamyl-tRNA(Gln) + L-glutamine + ATP + H2O = L-glutaminyl-tRNA(Gln) + L-glutamate + ADP + phosphate + H(+). Functionally, allows the formation of correctly charged Gln-tRNA(Gln) through the transamidation of misacylated Glu-tRNA(Gln) in the mitochondria. The reaction takes place in the presence of glutamine and ATP through an activated gamma-phospho-Glu-tRNA(Gln). The protein is Glutamyl-tRNA(Gln) amidotransferase subunit B, mitochondrial of Laccaria bicolor (strain S238N-H82 / ATCC MYA-4686) (Bicoloured deceiver).